The chain runs to 147 residues: Peptide methionine sulfoxide reductase MsrB (147 aa).

A MsrB domain is found at 25–147; that stretch reads DEYWREHLTE…NSVSLIFNKK (123 aa). Positions 64, 67, 113, and 116 each coordinate Zn(2+). The active-site Nucleophile is cysteine 136.

The protein belongs to the MsrB Met sulfoxide reductase family. The cofactor is Zn(2+).

The catalysed reaction is L-methionyl-[protein] + [thioredoxin]-disulfide + H2O = L-methionyl-(R)-S-oxide-[protein] + [thioredoxin]-dithiol. The sequence is that of Peptide methionine sulfoxide reductase MsrB from Vibrio cholerae serotype O1 (strain ATCC 39541 / Classical Ogawa 395 / O395).